The chain runs to 442 residues: MTSSSMTIAALATAPAAGAVGILRLSGPEALDVGRLLAPGVPAQPTPRHAYLASFVDAEGRSLDEGLFLYFRGPQSFTGEDVVELQAHGSPRLLRLLLTRALEDARVRHAAPGEFTRRAFLNGRLDLTRAEAVADLVAADSEAAVRAAAAGLSGALASRVQALEEPLRALHADMEGVLSFPDEAEGADEDVGERVTALRAQAETLLAEVGRGRLVRRGARVALFGPVNAGKSTLFNRLVGEARALVDDEPGTTRDALEARVEWDGLAVTLFDTAGLRETPGRVEALGIARTRALLTGVDLAVLVLPPGVTQAEVEAWTRDVGGTPVLVVDGKCDVAEVSSSPRQRVSGLTGEGVDALRDDMLGRLWGGGTPSAVALVSERHADALRRASEALGRAESASRVSTLEVVSGEVGLALEALGEVSGTVVSEALLDAIFQRFCIGK.

Residues R24, E84, and R124 each coordinate (6S)-5-formyl-5,6,7,8-tetrahydrofolate. One can recognise a TrmE-type G domain in the interval 218-366 (GARVALFGPV…LRDDMLGRLW (149 aa)). GTP-binding positions include 228–233 (NAGKST), 247–253 (DDEPGTT), and 272–275 (DTAG). Positions 232 and 253 each coordinate Mg(2+). K442 provides a ligand contact to (6S)-5-formyl-5,6,7,8-tetrahydrofolate.

Belongs to the TRAFAC class TrmE-Era-EngA-EngB-Septin-like GTPase superfamily. TrmE GTPase family. Homodimer. Heterotetramer of two MnmE and two MnmG subunits. K(+) is required as a cofactor.

The protein resides in the cytoplasm. Functionally, exhibits a very high intrinsic GTPase hydrolysis rate. Involved in the addition of a carboxymethylaminomethyl (cmnm) group at the wobble position (U34) of certain tRNAs, forming tRNA-cmnm(5)s(2)U34. The polypeptide is tRNA modification GTPase MnmE (Myxococcus xanthus (strain DK1622)).